The chain runs to 1182 residues: Intraflagellar transport protein 122 homolog (1182 aa).

WD repeat units follow at residues 10–50 (KAEQ…QPLK), 51–91 (GHKD…LKYT), 93–129 (NDSI…VSKH), 131–169 (SSSK…KVKI), 174–217 (GSLS…IGKD), 219–258 (PLNF…LGTV), 260–300 (EQNS…HGLY), and 453–492 (KQAT…LLFQ).

Component of the IFT complex A (IFT-A) complex. IFT-A complex is divided into a core subcomplex composed of IFT122:IFT140:WDR19 which is associated with TULP3 and a peripheral subcomplex composed of IFT43:WDR35:TTC21B. Interacts with IFT43:WDR35; the interaction connects the 2 IFT-A subcomplexes. Interacts with IFTAP; the interaction associates IFTAP with IFT-A complex.

It localises to the cell projection. Its subcellular location is the cilium. The protein resides in the cytoplasm. It is found in the cytoskeleton. The protein localises to the cilium basal body. Functionally, as a component of the IFT complex A (IFT-A), a complex required for retrograde ciliary transport and entry into cilia of G protein-coupled receptors (GPCRs), it is required in ciliogenesis and ciliary protein trafficking. Involved in cilia formation during neuronal patterning. Acts as a negative regulator of Shh signaling. Required to recruit TULP3 to primary cilia. This Mus musculus (Mouse) protein is Intraflagellar transport protein 122 homolog.